The primary structure comprises 183 residues: Ubiquinol-cytochrome c reductase iron-sulfur subunit (183 aa).

A helical membrane pass occupies residues L21–I41. A Rieske domain is found at I88–L181. [2Fe-2S] cluster is bound by residues C121, H123, C145, and H148. C126 and C147 are joined by a disulfide.

This sequence belongs to the Rieske iron-sulfur protein family. As to quaternary structure, the main subunits of complex b-c1 are: cytochrome b, cytochrome c1 and the Rieske protein. It depends on [2Fe-2S] cluster as a cofactor.

It is found in the cell inner membrane. It carries out the reaction a quinol + 2 Fe(III)-[cytochrome c](out) = a quinone + 2 Fe(II)-[cytochrome c](out) + 2 H(+)(out). Functionally, component of the ubiquinol-cytochrome c reductase complex (complex III or cytochrome b-c1 complex), which is a respiratory chain that generates an electrochemical potential coupled to ATP synthesis. This is Ubiquinol-cytochrome c reductase iron-sulfur subunit (petA) from Rhodospirillum rubrum.